Consider the following 157-residue polypeptide: uncharacterized protein (157 aa).

The N-terminal stretch at 1 to 26 (MEALRRAHEVALRLLLCRPWASRAAA) is a signal peptide.

It is found in the secreted. This is an uncharacterized protein from Homo sapiens (Human).